Consider the following 504-residue polypeptide: Chromosomal replication initiator protein DnaA (504 aa).

The domain I, interacts with DnaA modulators stretch occupies residues 1-109 (MTADPDPPFV…PTDEPEDAPD (109 aa)). The tract at residues 98-162 (ATPTDEPEDA…PDTSSDDSNA (65 aa)) is disordered. Residues 109 to 125 (DSFADSPAPASVPAGPA) are compositionally biased toward low complexity. Positions 110–163 (SFADSPAPASVPAGPADADEIDDDRDARVNAQESWPKYFSRPEPDTSSDDSNAV) are domain II. Residues 164-380 (NLNRRYTFDT…GALIRVTAFA (217 aa)) form a domain III, AAA+ region region. ATP contacts are provided by G208, G210, K211, and T212. The domain IV, binds dsDNA stretch occupies residues 381–504 (SLNKTRIDRS…TTRIRQRAKR (124 aa)).

The protein belongs to the DnaA family. Oligomerizes as a right-handed, spiral filament on DNA at oriC.

Its subcellular location is the cytoplasm. Plays an essential role in the initiation and regulation of chromosomal replication. ATP-DnaA binds to the origin of replication (oriC) to initiate formation of the DNA replication initiation complex once per cell cycle. Binds the DnaA box (a 9 base pair repeat at the origin) and separates the double-stranded (ds)DNA. Forms a right-handed helical filament on oriC DNA; dsDNA binds to the exterior of the filament while single-stranded (ss)DNA is stabiized in the filament's interior. The ATP-DnaA-oriC complex binds and stabilizes one strand of the AT-rich DNA unwinding element (DUE), permitting loading of DNA polymerase. After initiation quickly degrades to an ADP-DnaA complex that is not apt for DNA replication. Binds acidic phospholipids. Functionally, the probable consensus sequence for the DnaA box of this bacterium is 5'-TT(G/C)TCCACA-3'. This Mycolicibacterium smegmatis (strain ATCC 700084 / mc(2)155) (Mycobacterium smegmatis) protein is Chromosomal replication initiator protein DnaA.